The following is a 682-amino-acid chain: Potassium-transporting ATPase ATP-binding subunit (682 aa).

Helical transmembrane passes span 34-54 (PVMF…IAMA), 62-82 (ALFS…ANFA), 219-239 (IALT…TATL), and 254-274 (VLVA…LSAI). Asp307 functions as the 4-aspartylphosphate intermediate in the catalytic mechanism. ATP is bound by residues Asp344, Glu348, 377–384 (FTAQSRMS), and Lys395. Mg(2+) contacts are provided by Asp518 and Asp522. A run of 3 helical transmembrane segments spans residues 588–608 (FAII…LNIM), 616–636 (AILS…PLAL), and 656–676 (IYGL…DLLL).

Belongs to the cation transport ATPase (P-type) (TC 3.A.3) family. Type IA subfamily. The system is composed of three essential subunits: KdpA, KdpB and KdpC.

The protein resides in the cell inner membrane. It catalyses the reaction K(+)(out) + ATP + H2O = K(+)(in) + ADP + phosphate + H(+). Part of the high-affinity ATP-driven potassium transport (or Kdp) system, which catalyzes the hydrolysis of ATP coupled with the electrogenic transport of potassium into the cytoplasm. This subunit is responsible for energy coupling to the transport system and for the release of the potassium ions to the cytoplasm. This is Potassium-transporting ATPase ATP-binding subunit from Escherichia coli O139:H28 (strain E24377A / ETEC).